The following is a 425-amino-acid chain: Putative TRAP transporter large permease protein HI_1029 (425 aa).

13 consecutive transmembrane segments (helical) span residues 3-23, 24-44, 54-74, 93-113, 139-159, 169-189, 217-237, 241-261, 275-295, 312-332, 334-354, 355-375, and 399-419; these read VIIF…VAFA, LLIC…QILA, FSLM…EGGL, LGFV…SAVA, LIGT…FIVF, KLFL…AILW, VWAL…IFTP, GVVA…ELPL, TAVV…ITVA, PTIL…VMDL, PTVL…GIDP, VYFG…PPVG, and YLGM…LILM.

It belongs to the TRAP transporter large permease family.

The protein localises to the cell inner membrane. The protein is Putative TRAP transporter large permease protein HI_1029 of Haemophilus influenzae (strain ATCC 51907 / DSM 11121 / KW20 / Rd).